We begin with the raw amino-acid sequence, 432 residues long: Asparagine--tRNA ligase 2 (432 aa).

Belongs to the class-II aminoacyl-tRNA synthetase family. In terms of assembly, homodimer.

The protein localises to the cytoplasm. The enzyme catalyses tRNA(Asn) + L-asparagine + ATP = L-asparaginyl-tRNA(Asn) + AMP + diphosphate + H(+). This chain is Asparagine--tRNA ligase 2 (asnS2), found in Lactiplantibacillus plantarum (strain ATCC BAA-793 / NCIMB 8826 / WCFS1) (Lactobacillus plantarum).